Reading from the N-terminus, the 314-residue chain is Probable cell division protein WhiA (314 aa).

Residues 277–311 constitute a DNA-binding region (H-T-H motif); sequence TLKELGEKMPSGAISKSGINHRLRKLNQLAEGYQQ.

It belongs to the WhiA family.

Its function is as follows. Involved in cell division and chromosome segregation. The protein is Probable cell division protein WhiA of Latilactobacillus sakei subsp. sakei (strain 23K) (Lactobacillus sakei subsp. sakei).